A 106-amino-acid polypeptide reads, in one-letter code: Putative membrane protein insertion efficiency factor (106 aa).

This sequence belongs to the UPF0161 family.

The protein localises to the cell inner membrane. In terms of biological role, could be involved in insertion of integral membrane proteins into the membrane. This Methylacidiphilum infernorum (isolate V4) (Methylokorus infernorum (strain V4)) protein is Putative membrane protein insertion efficiency factor.